The primary structure comprises 86 residues: Large ribosomal subunit protein bL31B (86 aa).

Belongs to the bacterial ribosomal protein bL31 family. Type B subfamily. In terms of assembly, part of the 50S ribosomal subunit.

In Cupriavidus pinatubonensis (strain JMP 134 / LMG 1197) (Cupriavidus necator (strain JMP 134)), this protein is Large ribosomal subunit protein bL31B.